The chain runs to 630 residues: Chaperone protein HtpG (630 aa).

The segment at 1–339 (MSHTETHAFQ…SNDLPLNVSR (339 aa)) is a; substrate-binding. A b region spans residues 340-556 (EILQSNRVVD…EGDISAHMAR (217 aa)). Residues 557-630 (MMEQMGQAMP…RMNALLSEVI (74 aa)) are c.

This sequence belongs to the heat shock protein 90 family. As to quaternary structure, homodimer.

The protein localises to the cytoplasm. Its function is as follows. Molecular chaperone. Has ATPase activity. The sequence is that of Chaperone protein HtpG from Hydrogenovibrio crunogenus (strain DSM 25203 / XCL-2) (Thiomicrospira crunogena).